We begin with the raw amino-acid sequence, 310 residues long: 4-hydroxyproline 2-epimerase (310 aa).

The active-site Proton acceptor is Cys88. Substrate-binding positions include 89 to 90 (GH), His208, and Asp232. Cys236 serves as the catalytic Proton donor. 237–238 (GT) provides a ligand contact to substrate.

Belongs to the proline racemase family.

The catalysed reaction is trans-4-hydroxy-L-proline = cis-4-hydroxy-D-proline. In terms of biological role, catalyzes the epimerization of trans-4-hydroxy-L-proline (t4LHyp) to cis-4-hydroxy-D-proline (c4DHyp). Is likely involved in a degradation pathway that converts t4LHyp to alpha-ketoglutarate. Displays no proline racemase activity. This is 4-hydroxyproline 2-epimerase from Acinetobacter baumannii (strain ATCC 17978 / DSM 105126 / CIP 53.77 / LMG 1025 / NCDC KC755 / 5377).